The following is a 321-amino-acid chain: Lipoyl synthase (321 aa).

Positions 68, 73, 79, 94, 98, 101, and 308 each coordinate [4Fe-4S] cluster. Positions Phe80–Thr297 constitute a Radical SAM core domain.

Belongs to the radical SAM superfamily. Lipoyl synthase family. [4Fe-4S] cluster serves as cofactor.

The protein localises to the cytoplasm. It carries out the reaction [[Fe-S] cluster scaffold protein carrying a second [4Fe-4S](2+) cluster] + N(6)-octanoyl-L-lysyl-[protein] + 2 oxidized [2Fe-2S]-[ferredoxin] + 2 S-adenosyl-L-methionine + 4 H(+) = [[Fe-S] cluster scaffold protein] + N(6)-[(R)-dihydrolipoyl]-L-lysyl-[protein] + 4 Fe(3+) + 2 hydrogen sulfide + 2 5'-deoxyadenosine + 2 L-methionine + 2 reduced [2Fe-2S]-[ferredoxin]. It functions in the pathway protein modification; protein lipoylation via endogenous pathway; protein N(6)-(lipoyl)lysine from octanoyl-[acyl-carrier-protein]: step 2/2. Catalyzes the radical-mediated insertion of two sulfur atoms into the C-6 and C-8 positions of the octanoyl moiety bound to the lipoyl domains of lipoate-dependent enzymes, thereby converting the octanoylated domains into lipoylated derivatives. This is Lipoyl synthase from Pseudoalteromonas translucida (strain TAC 125).